The primary structure comprises 233 residues: Putative N-acetylmannosamine-6-phosphate 2-epimerase (233 aa).

The protein belongs to the NanE family.

It catalyses the reaction an N-acyl-D-glucosamine 6-phosphate = an N-acyl-D-mannosamine 6-phosphate. It participates in amino-sugar metabolism; N-acetylneuraminate degradation; D-fructose 6-phosphate from N-acetylneuraminate: step 3/5. Converts N-acetylmannosamine-6-phosphate (ManNAc-6-P) to N-acetylglucosamine-6-phosphate (GlcNAc-6-P). In Yersinia pestis bv. Antiqua (strain Antiqua), this protein is Putative N-acetylmannosamine-6-phosphate 2-epimerase.